Reading from the N-terminus, the 223-residue chain is Ribonuclease HII (223 aa).

In terms of domain architecture, RNase H type-2 spans 1-219 (MMIAGIDEAG…VENIREELEK (219 aa)). Residues D7, E8, and D105 each coordinate a divalent metal cation.

The protein belongs to the RNase HII family. It depends on Mn(2+) as a cofactor. Mg(2+) serves as cofactor.

It localises to the cytoplasm. It carries out the reaction Endonucleolytic cleavage to 5'-phosphomonoester.. Its function is as follows. Endonuclease that specifically degrades the RNA of RNA-DNA hybrids. This Methanosarcina acetivorans (strain ATCC 35395 / DSM 2834 / JCM 12185 / C2A) protein is Ribonuclease HII.